The chain runs to 284 residues: 4-hydroxybenzoate octaprenyltransferase (284 aa).

9 helical membrane passes run 19–39 (IPILLILWPTLTALVLASHGL), 42–62 (ISYLVIFTIGVVVMRTVGCII), 85–105 (GQLSIKNAIWLCISLTLVAFI), 107–127 (VLFLNLYTILLSFVALFLAIL), 134–154 (FFAIPQLILGLAFNFGIFMAF), 165–185 (AWIFYIATICWTIAYDTIYAL), 211–231 (ILLFNFLSLLLLIILGIYCDF), 233–253 (SFFYLGVVICSLFFVRNYFLY), and 261–281 (CINAFSANHWIGLIIFIIAVI).

Belongs to the UbiA prenyltransferase family. Mg(2+) serves as cofactor.

The protein localises to the cell inner membrane. It catalyses the reaction all-trans-octaprenyl diphosphate + 4-hydroxybenzoate = 4-hydroxy-3-(all-trans-octaprenyl)benzoate + diphosphate. It functions in the pathway cofactor biosynthesis; ubiquinone biosynthesis. Catalyzes the prenylation of para-hydroxybenzoate (PHB) with an all-trans polyprenyl group. Mediates the second step in the final reaction sequence of ubiquinone-8 (UQ-8) biosynthesis, which is the condensation of the polyisoprenoid side chain with PHB, generating the first membrane-bound Q intermediate 3-octaprenyl-4-hydroxybenzoate. This is 4-hydroxybenzoate octaprenyltransferase from Francisella tularensis subsp. tularensis (strain FSC 198).